A 339-amino-acid polypeptide reads, in one-letter code: Glyceraldehyde-3-phosphate dehydrogenase (339 aa).

NAD(+) is bound by residues 12–13, Asp-39, Arg-84, and Ser-127; that span reads RI. D-glyceraldehyde 3-phosphate contacts are provided by residues 157 to 159, Thr-188, Arg-203, 216 to 217, and Arg-239; these read SCT and TG. Cys-158 serves as the catalytic Nucleophile. Position 320 (Asn-320) interacts with NAD(+).

The protein belongs to the glyceraldehyde-3-phosphate dehydrogenase family. Homotetramer.

The protein localises to the cytoplasm. It catalyses the reaction D-glyceraldehyde 3-phosphate + phosphate + NAD(+) = (2R)-3-phospho-glyceroyl phosphate + NADH + H(+). It participates in carbohydrate degradation; glycolysis; pyruvate from D-glyceraldehyde 3-phosphate: step 1/5. Its function is as follows. Catalyzes the oxidative phosphorylation of glyceraldehyde 3-phosphate (G3P) to 1,3-bisphosphoglycerate (BPG) using the cofactor NAD. The first reaction step involves the formation of a hemiacetal intermediate between G3P and a cysteine residue, and this hemiacetal intermediate is then oxidized to a thioester, with concomitant reduction of NAD to NADH. The reduced NADH is then exchanged with the second NAD, and the thioester is attacked by a nucleophilic inorganic phosphate to produce BPG. This is Glyceraldehyde-3-phosphate dehydrogenase (gapA) from Mycobacterium leprae (strain TN).